The chain runs to 208 residues: Small ribosomal subunit protein uS4 (208 aa).

The segment at 28-48 is disordered; that stretch reads YFEKRPYPPGEHGRARRRTES. The S4 RNA-binding domain maps to 95-159; that stretch reads MRLDALVLRS…ARTPFQVAAA (65 aa).

This sequence belongs to the universal ribosomal protein uS4 family. In terms of assembly, part of the 30S ribosomal subunit. Contacts protein S5. The interaction surface between S4 and S5 is involved in control of translational fidelity.

In terms of biological role, one of the primary rRNA binding proteins, it binds directly to 16S rRNA where it nucleates assembly of the body of the 30S subunit. Functionally, with S5 and S12 plays an important role in translational accuracy. The sequence is that of Small ribosomal subunit protein uS4 from Beutenbergia cavernae (strain ATCC BAA-8 / DSM 12333 / CCUG 43141 / JCM 11478 / NBRC 16432 / NCIMB 13614 / HKI 0122).